Reading from the N-terminus, the 278-residue chain is MSDFSGSGWLAEIFLRYELKRGVTRLTDKQHIGPLMVQRPFYPEQGIAHTYLLHPPGGVVGGDKLLINIDVQPHAHALLTTPGATKFYRSAGGVARQVQTLTVAPNGFLEWLPQENIFFPEAQVRLETHVRIASSSKFISWEIQCLGRPVLNEQFDNGDIRGRLQFYIDDKLTLAESIFIEGSQKQSAVMREFPMVGSLYIYPASDELKAELHESLAVFFSTEVRPLEYGLTDVDGILVLRLLGSQTEPMMACFAHIWQATRQYWLGYCPEPPRIWAT.

The protein belongs to the UreD family. UreD, UreF and UreG form a complex that acts as a GTP-hydrolysis-dependent molecular chaperone, activating the urease apoprotein by helping to assemble the nickel containing metallocenter of UreC. The UreE protein probably delivers the nickel.

It localises to the cytoplasm. In terms of biological role, required for maturation of urease via the functional incorporation of the urease nickel metallocenter. The polypeptide is Urease accessory protein UreD (Escherichia coli).